The following is a 109-amino-acid chain: Large ribosomal subunit protein uL22 (109 aa).

The protein belongs to the universal ribosomal protein uL22 family. Part of the 50S ribosomal subunit.

Functionally, this protein binds specifically to 23S rRNA; its binding is stimulated by other ribosomal proteins, e.g. L4, L17, and L20. It is important during the early stages of 50S assembly. It makes multiple contacts with different domains of the 23S rRNA in the assembled 50S subunit and ribosome. In terms of biological role, the globular domain of the protein is located near the polypeptide exit tunnel on the outside of the subunit, while an extended beta-hairpin is found that lines the wall of the exit tunnel in the center of the 70S ribosome. The sequence is that of Large ribosomal subunit protein uL22 from Ralstonia pickettii (strain 12J).